A 556-amino-acid chain; its full sequence is Probable zinc metalloprotease EGY2, chloroplastic (556 aa).

Residues 1-64 (MNLAVASFRG…VFRKRETLVR (64 aa)) constitute a chloroplast transit peptide. The interval 63–133 (VRVTETQTEP…DGDKLEVSSG (71 aa)) is disordered. The next 7 helical transmembrane spans lie at 267–287 (AVPEWFAAGSFGLVALFTLFL), 311–331 (LPGALVTALVLGVHELGHILV), 336–356 (GIKLGVPFFVPSWQIGSFGAI), 374–394 (AAGPLAGFSLGLILFLIGLFV), 437–457 (PLVIWAWAGLLINGINSIPAG), 484–504 (LLGLSALFSDVAFYWVVLIFF), and 527–547 (LGILVLFLSLLVCLPYPFAFT).

Belongs to the peptidase M50B family.

It is found in the plastid. It localises to the chloroplast membrane. Functionally, probable membrane-associated metalloprotease that may be involved in chloroplast development. The chain is Probable zinc metalloprotease EGY2, chloroplastic (EGY2) from Arabidopsis thaliana (Mouse-ear cress).